The primary structure comprises 28 residues: Ranatuerin-2LTa (28 aa).

An intrachain disulfide couples C23 to C28.

Expressed by the skin glands.

The protein localises to the secreted. Functionally, has antibacterial activity. In Rana latastei (Italian agile frog), this protein is Ranatuerin-2LTa.